The sequence spans 84 residues: U4-theraphotoxin-Hhn1b (84 aa).

The signal sequence occupies residues Met1–Ala22. Residues Glu23–Arg47 constitute a propeptide that is removed on maturation. Cystine bridges form between Cys51–Cys65, Cys55–Cys76, and Cys70–Cys81.

Belongs to the neurotoxin 12 (Hwtx-2) family. 02 (Hwtx-2) subfamily. In terms of tissue distribution, expressed by the venom gland.

The protein resides in the secreted. Functionally, postsynaptic neurotoxin. This chain is U4-theraphotoxin-Hhn1b, found in Cyriopagopus hainanus (Chinese bird spider).